Reading from the N-terminus, the 407-residue chain is Phosphopentomutase (407 aa).

Residues aspartate 10, aspartate 306, histidine 311, aspartate 347, histidine 348, and histidine 359 each coordinate Mn(2+).

Belongs to the phosphopentomutase family. The cofactor is Mn(2+).

Its subcellular location is the cytoplasm. The enzyme catalyses 2-deoxy-alpha-D-ribose 1-phosphate = 2-deoxy-D-ribose 5-phosphate. It catalyses the reaction alpha-D-ribose 1-phosphate = D-ribose 5-phosphate. It participates in carbohydrate degradation; 2-deoxy-D-ribose 1-phosphate degradation; D-glyceraldehyde 3-phosphate and acetaldehyde from 2-deoxy-alpha-D-ribose 1-phosphate: step 1/2. Isomerase that catalyzes the conversion of deoxy-ribose 1-phosphate (dRib-1-P) and ribose 1-phosphate (Rib-1-P) to deoxy-ribose 5-phosphate (dRib-5-P) and ribose 5-phosphate (Rib-5-P), respectively. This is Phosphopentomutase from Enterobacter sp. (strain 638).